A 191-amino-acid chain; its full sequence is Protein GrpE (191 aa).

This sequence belongs to the GrpE family. Homodimer.

It is found in the cytoplasm. Participates actively in the response to hyperosmotic and heat shock by preventing the aggregation of stress-denatured proteins, in association with DnaK and GrpE. It is the nucleotide exchange factor for DnaK and may function as a thermosensor. Unfolded proteins bind initially to DnaJ; upon interaction with the DnaJ-bound protein, DnaK hydrolyzes its bound ATP, resulting in the formation of a stable complex. GrpE releases ADP from DnaK; ATP binding to DnaK triggers the release of the substrate protein, thus completing the reaction cycle. Several rounds of ATP-dependent interactions between DnaJ, DnaK and GrpE are required for fully efficient folding. The protein is Protein GrpE of Helicobacter pylori (strain P12).